The primary structure comprises 152 residues: Transcriptional regulator MraZ (152 aa).

SpoVT-AbrB domains are found at residues 5–52 (ATLV…PLPE) and 81–124 (ASEC…DETT).

It belongs to the MraZ family. Forms oligomers.

It localises to the cytoplasm. The protein resides in the nucleoid. Negatively regulates its own expression and that of the subsequent genes in the proximal part of the division and cell wall (dcw) gene cluster. Acts by binding directly to DNA. May also regulate the expression of genes outside the dcw cluster. The chain is Transcriptional regulator MraZ from Shigella dysenteriae serotype 1 (strain Sd197).